The chain runs to 445 residues: Exodeoxyribonuclease 7 large subunit (445 aa).

It belongs to the XseA family. In terms of assembly, heterooligomer composed of large and small subunits.

Its subcellular location is the cytoplasm. The enzyme catalyses Exonucleolytic cleavage in either 5'- to 3'- or 3'- to 5'-direction to yield nucleoside 5'-phosphates.. Bidirectionally degrades single-stranded DNA into large acid-insoluble oligonucleotides, which are then degraded further into small acid-soluble oligonucleotides. The polypeptide is Exodeoxyribonuclease 7 large subunit (Staphylococcus epidermidis (strain ATCC 35984 / DSM 28319 / BCRC 17069 / CCUG 31568 / BM 3577 / RP62A)).